The sequence spans 530 residues: Autoinducer-2 kinase (530 aa).

The protein belongs to the FGGY kinase family.

It is found in the cytoplasm. It carries out the reaction (S)-4,5-dihydroxypentane-2,3-dione + ATP = (2S)-2-hydroxy-3,4-dioxopentyl phosphate + ADP + H(+). In terms of biological role, catalyzes the phosphorylation of autoinducer-2 (AI-2) to phospho-AI-2, which subsequently inactivates the transcriptional regulator LsrR and leads to the transcription of the lsr operon. Phosphorylates the ring-open form of (S)-4,5-dihydroxypentane-2,3-dione (DPD), which is the precursor to all AI-2 signaling molecules, at the C5 position. The protein is Autoinducer-2 kinase of Salmonella typhimurium (strain LT2 / SGSC1412 / ATCC 700720).